The chain runs to 311 residues: Cell division protein ZipA (311 aa).

The Periplasmic portion of the chain corresponds to 1–6 (MENLQL). The chain crosses the membrane as a helical span at residues 7-27 (VLFVLGAIAIIAVLVHGFWSI). Residues 28-311 (RKQQPKSLKE…YLQRIRAQLD (284 aa)) lie on the Cytoplasmic side of the membrane. The disordered stretch occupies residues 46–114 (DQASVRDSQG…FALSDEPVQR (69 aa)). 2 stretches are compositionally biased toward basic and acidic residues: residues 62-83 (GEVRVRKEVPATDRQEKEDKPV) and 94-103 (RDVEDSRHEQ).

Belongs to the ZipA family. Interacts with FtsZ via their C-terminal domains.

The protein resides in the cell inner membrane. In terms of biological role, essential cell division protein that stabilizes the FtsZ protofilaments by cross-linking them and that serves as a cytoplasmic membrane anchor for the Z ring. Also required for the recruitment to the septal ring of downstream cell division proteins. In Shewanella woodyi (strain ATCC 51908 / MS32), this protein is Cell division protein ZipA.